A 323-amino-acid chain; its full sequence is Melanocortin receptor 3 (323 aa).

Residues 1–37 (MNASCCLPSVQPTLPNGSEHLQAPFFSNQSSSAFCEQ) lie on the Extracellular side of the membrane. N2, N16, and N28 each carry an N-linked (GlcNAc...) asparagine glycan. The chain crosses the membrane as a helical span at residues 38 to 63 (VFIKPEVFLSLGIVSLLENILVILAV). Residues 64–75 (VRNGNLHSPMYF) are Cytoplasmic-facing. The helical transmembrane segment at 76–100 (FLCSLAVADMLVSVSNALETIMIAI) threads the bilayer. The Extracellular portion of the chain corresponds to 101 to 118 (VHSDYLTFEDQFIQHMDN). A helical transmembrane segment spans residues 119–140 (IFDSMICISLVASICNLLAIAV). Residues 141 to 160 (DRYVTIFYALRYHSIMTVRK) lie on the Cytoplasmic side of the membrane. The chain crosses the membrane as a helical span at residues 161–181 (ALTLIVAIWVCCGVCGVVFIV). Topologically, residues 182 to 186 (YSESK) are extracellular. Residues 187–210 (MVIVCLITMFFAMMLLMGTLYVHM) form a helical membrane-spanning segment. The Cytoplasmic portion of the chain corresponds to 211–245 (FLFARLHVKRIAALPPADGVAPQQHSCMKGAVTIT). The chain crosses the membrane as a helical span at residues 246-268 (ILLGVFIFCWAPFFLHLVLIITC). The Extracellular segment spans residues 269-277 (PTNPYCICY). The helical transmembrane segment at 278–301 (TAHFNTYLVLIMCNSVIDPLIYAF) threads the bilayer. The Cytoplasmic portion of the chain corresponds to 302–323 (RSLELRNTFREILCGCNGMNLG). C315 carries the S-palmitoyl cysteine lipid modification.

The protein belongs to the G-protein coupled receptor 1 family. Brain, placental, and gut tissues.

It is found in the cell membrane. Its function is as follows. Receptor for MSH (alpha, beta and gamma) and ACTH. This receptor is mediated by G proteins which activate adenylate cyclase. Required for expression of anticipatory patterns of activity and wakefulness during periods of limited nutrient availability and for the normal regulation of circadian clock activity in the brain. In Homo sapiens (Human), this protein is Melanocortin receptor 3 (MC3R).